A 368-amino-acid chain; its full sequence is MAPCMLLLLLAAALAPTQTRAGPHSLRYFHTAVSRPGLGKPRFISVGYVDDTEFVRFDSDAENPRYEPRARWMEQVEPEYWERNTQIAKDNEQSSRVDLRTLLRYYNQSAGGSHTIQRMYGCDVGSDGRLLRGYEQVAYDGCDYIALNEDLKTWTAADMAALITKHKWEQAGAAERRRAYLEGACVEWLSRHLKNGNATLLRTDSPKAHVTHHSRPEDKVTLRCWALGFYPADITLTWQLNGEELTQDMELVETRPAGDGTFQKWASVVVPLGKEQYYTCHVYHQGLPKPLTLRWEPPPSAVSNTVIIAVLVVLGAAIVTGAVVAFVMMRRRNTGGKGGDYALAPGSQTSDLSLPDCKVMVHDPHSLA.

An N-terminal signal peptide occupies residues 1–21; that stretch reads MAPCMLLLLLAAALAPTQTRA. Residues 22-111 form an alpha-1 region; that stretch reads GPHSLRYFHT…LLRYYNQSAG (90 aa). The Extracellular segment spans residues 22–305; that stretch reads GPHSLRYFHT…EPPPSAVSNT (284 aa). A glycan (N-linked (GlcNAc...) asparagine) is linked at Asn-107. Residues 112–203 form an alpha-2 region; that stretch reads GSHTIQRMYG…KNGNATLLRT (92 aa). An intrachain disulfide couples Cys-122 to Cys-185. Residue Asn-197 is glycosylated (N-linked (GlcNAc...) asparagine). Residues 204 to 295 form an alpha-3 region; that stretch reads DSPKAHVTHH…GLPKPLTLRW (92 aa). The region spanning 206–292 is the Ig-like C1-type domain; the sequence is PKAHVTHHSR…YHQGLPKPLT (87 aa). Residues Cys-224 and Cys-280 are joined by a disulfide bond. The interval 296-305 is connecting peptide; that stretch reads EPPPSAVSNT. Residues 306 to 329 traverse the membrane as a helical segment; that stretch reads VIIAVLVVLGAAIVTGAVVAFVMM. The Cytoplasmic portion of the chain corresponds to 330-368; sequence RRRNTGGKGGDYALAPGSQTSDLSLPDCKVMVHDPHSLA. Residues Ser-350 and Ser-353 each carry the phosphoserine modification.

Belongs to the MHC class I family. Heterodimer of an alpha chain and a beta chain (beta-2-microglobulin).

Its subcellular location is the membrane. Involved in the presentation of foreign antigens to the immune system. The sequence is that of H-2 class I histocompatibility antigen, K-W28 alpha chain (H2-K1) from Mus musculus (Mouse).